A 461-amino-acid polypeptide reads, in one-letter code: Photosystem II CP43 reaction center protein (461 aa).

The propeptide occupies 1–2; the sequence is ME. T3 is modified (N-acetylthreonine). At T3 the chain carries Phosphothreonine. A run of 5 helical transmembrane segments spans residues 57–81, 122–143, 166–188, 243–263, and 279–300; these read LFEV…PHLA, LLGP…KDRN, KALY…RKIT, KPFA…LSYS, and WFNN…ASQA. Residue E355 coordinates [CaMn4O5] cluster. Residues 435 to 459 form a helical membrane-spanning segment; it reads RARAAAAGFEKGIDRDFEPVLSMTP.

This sequence belongs to the PsbB/PsbC family. PsbC subfamily. As to quaternary structure, PSII is composed of 1 copy each of membrane proteins PsbA, PsbB, PsbC, PsbD, PsbE, PsbF, PsbH, PsbI, PsbJ, PsbK, PsbL, PsbM, PsbT, PsbX, PsbY, PsbZ, Psb30/Ycf12, at least 3 peripheral proteins of the oxygen-evolving complex and a large number of cofactors. It forms dimeric complexes. It depends on Binds multiple chlorophylls and provides some of the ligands for the Ca-4Mn-5O cluster of the oxygen-evolving complex. It may also provide a ligand for a Cl- that is required for oxygen evolution. PSII binds additional chlorophylls, carotenoids and specific lipids. as a cofactor.

It is found in the plastid. The protein localises to the chloroplast thylakoid membrane. One of the components of the core complex of photosystem II (PSII). It binds chlorophyll and helps catalyze the primary light-induced photochemical processes of PSII. PSII is a light-driven water:plastoquinone oxidoreductase, using light energy to abstract electrons from H(2)O, generating O(2) and a proton gradient subsequently used for ATP formation. The protein is Photosystem II CP43 reaction center protein of Platanus occidentalis (Sycamore).